A 955-amino-acid chain; its full sequence is Alpha-1,4 glucan phosphorylase L isozyme, chloroplastic/amyloplastic (955 aa).

A chloroplast-targeting transit peptide spans Met1–Val43. The segment at Lys522 to Ile550 is disordered. Acidic residues predominate over residues Glu528–Pro545. Position 801 is an N6-(pyridoxal phosphate)lysine (Lys801).

Belongs to the glycogen phosphorylase family. Pyridoxal 5'-phosphate serves as cofactor.

The protein localises to the plastid. The protein resides in the chloroplast. Its subcellular location is the amyloplast. It catalyses the reaction [(1-&gt;4)-alpha-D-glucosyl](n) + phosphate = [(1-&gt;4)-alpha-D-glucosyl](n-1) + alpha-D-glucose 1-phosphate. Phosphorylase is an important allosteric enzyme in carbohydrate metabolism. Enzymes from different sources differ in their regulatory mechanisms and in their natural substrates. However, all known phosphorylases share catalytic and structural properties. This Ipomoea batatas (Sweet potato) protein is Alpha-1,4 glucan phosphorylase L isozyme, chloroplastic/amyloplastic.